We begin with the raw amino-acid sequence, 673 residues long: Glycine--tRNA ligase beta subunit (673 aa).

The protein belongs to the class-II aminoacyl-tRNA synthetase family. As to quaternary structure, tetramer of two alpha and two beta subunits.

The protein localises to the cytoplasm. It carries out the reaction tRNA(Gly) + glycine + ATP = glycyl-tRNA(Gly) + AMP + diphosphate. This Lactococcus lactis subsp. cremoris (strain SK11) protein is Glycine--tRNA ligase beta subunit.